We begin with the raw amino-acid sequence, 505 residues long: Maturase K (505 aa).

The protein belongs to the intron maturase 2 family. MatK subfamily.

It is found in the plastid. Its subcellular location is the chloroplast. Functionally, usually encoded in the trnK tRNA gene intron. Probably assists in splicing its own and other chloroplast group II introns. The sequence is that of Maturase K from Spinacia oleracea (Spinach).